The primary structure comprises 180 residues: Adipocyte-related X-chromosome expressed sequence 1 (180 aa).

The Cytoplasmic portion of the chain corresponds to 1 to 11 (MNSLLSRANSL). Residues 12–32 (FAFTLSVMAALTLGCILTTAF) traverse the membrane as a helical; Signal-anchor for type II membrane protein segment. Residues 33–180 (KDRSAPVRLH…PDSYEIATTF (148 aa)) are Lumenal-facing. N-linked (GlcNAc...) asparagine glycosylation occurs at asparagine 141.

Belongs to the SPCS3 family. Strongly expressed in epididymal white and brown adipose tissue with low levels in heart.

Its subcellular location is the endoplasmic reticulum membrane. In terms of biological role, plays a role in adipogenesis. The chain is Adipocyte-related X-chromosome expressed sequence 1 from Mus musculus (Mouse).